The sequence spans 430 residues: Shufflon protein A' (430 aa).

A constant region region spans residues 1-361; sequence MKKYDRGWAS…TGAILSCQSG (361 aa). Residues 362–430 are variable region; sequence TWGTIGGKLK…GCIASCVTLN (69 aa).

The polypeptide is Shufflon protein A' (Escherichia coli).